A 225-amino-acid polypeptide reads, in one-letter code: MLVKIVLVVLLTLALVFECFSTISVPITIGLYISEYNGYRFGVFGWCKVDRSVCSPIRIGYSKDDILLFNEQEYLHLPNHAKYALSNLLLVHVLAFVCVTILWVFGMLTCFRCIKTSRRMLIIAVLWSMLTFMVTLLGFLIDILIFSSHVTWCTWLTLASAFFTVLSGTVLCVMRRNLTYDKFLESKPEKHGVYVPLCRLNDVEELEIPWCNTMNHQALTAPTPM.

The Cytoplasmic segment spans residues M1–K4. A helical transmembrane segment spans residues I5–V25. Residues P26–N87 are Extracellular-facing. A helical transmembrane segment spans residues L88 to L108. Residues T109–M120 are Cytoplasmic-facing. A helical membrane pass occupies residues L121–I141. At D142–C153 the chain is on the extracellular side. The helical transmembrane segment at T154–M174 threads the bilayer. Topologically, residues R175 to M225 are cytoplasmic.

It belongs to the palI/RIM9 family.

The protein localises to the cell membrane. In terms of biological role, required for the proteolytic cleavage of the transcription factor RIM101 in response to alkaline ambient pH. This is pH-response regulator palI/RIM9 homolog 2 from Kluyveromyces lactis (strain ATCC 8585 / CBS 2359 / DSM 70799 / NBRC 1267 / NRRL Y-1140 / WM37) (Yeast).